The chain runs to 805 residues: Phenylalanine--tRNA ligase beta subunit (805 aa).

One can recognise a tRNA-binding domain in the interval Ser39–Phe154. The B5 domain maps to Val410–Ala485. The Mg(2+) site is built by Asp463, Asp469, Glu472, and Glu473. Positions Ser712–Arg805 constitute an FDX-ACB domain.

This sequence belongs to the phenylalanyl-tRNA synthetase beta subunit family. Type 1 subfamily. In terms of assembly, tetramer of two alpha and two beta subunits. It depends on Mg(2+) as a cofactor.

The protein localises to the cytoplasm. It catalyses the reaction tRNA(Phe) + L-phenylalanine + ATP = L-phenylalanyl-tRNA(Phe) + AMP + diphosphate + H(+). The polypeptide is Phenylalanine--tRNA ligase beta subunit (Lactiplantibacillus plantarum (strain ATCC BAA-793 / NCIMB 8826 / WCFS1) (Lactobacillus plantarum)).